The sequence spans 232 residues: LexA repressor (232 aa).

Positions 35-55 (IREIGDAAGLQSTSSVAYQLK) form a DNA-binding region, H-T-H motif. Basic and acidic residues predominate over residues 61–85 (GFLRRDPNKPRAVDVRHLPETESRS). The segment at 61 to 104 (GFLRRDPNKPRAVDVRHLPETESRSSKAATQAKSKAPQAGVHDP) is disordered. Positions 86–99 (SKAATQAKSKAPQA) are enriched in low complexity. Residues S156 and K193 each act as for autocatalytic cleavage activity in the active site.

Belongs to the peptidase S24 family. In terms of assembly, homodimer.

It carries out the reaction Hydrolysis of Ala-|-Gly bond in repressor LexA.. In terms of biological role, represses a number of genes involved in the response to DNA damage (SOS response), including recA and lexA. In the presence of single-stranded DNA, RecA interacts with LexA causing an autocatalytic cleavage which disrupts the DNA-binding part of LexA, leading to derepression of the SOS regulon and eventually DNA repair. This chain is LexA repressor, found in Corynebacterium glutamicum (strain ATCC 13032 / DSM 20300 / JCM 1318 / BCRC 11384 / CCUG 27702 / LMG 3730 / NBRC 12168 / NCIMB 10025 / NRRL B-2784 / 534).